Reading from the N-terminus, the 509-residue chain is Histidine ammonia-lyase (509 aa).

The segment at residues 142-144 (ASG) is a cross-link (5-imidazolinone (Ala-Gly)). Serine 143 bears the 2,3-didehydroalanine (Ser) mark.

This sequence belongs to the PAL/histidase family. Contains an active site 4-methylidene-imidazol-5-one (MIO), which is formed autocatalytically by cyclization and dehydration of residues Ala-Ser-Gly.

Its subcellular location is the cytoplasm. The enzyme catalyses L-histidine = trans-urocanate + NH4(+). Its pathway is amino-acid degradation; L-histidine degradation into L-glutamate; N-formimidoyl-L-glutamate from L-histidine: step 1/3. The polypeptide is Histidine ammonia-lyase (Pseudomonas aeruginosa (strain LESB58)).